The following is a 330-amino-acid chain: Phenylalanine--tRNA ligase alpha subunit (330 aa).

Glu246 provides a ligand contact to Mg(2+).

Belongs to the class-II aminoacyl-tRNA synthetase family. Phe-tRNA synthetase alpha subunit type 1 subfamily. As to quaternary structure, tetramer of two alpha and two beta subunits. The cofactor is Mg(2+).

The protein localises to the cytoplasm. The catalysed reaction is tRNA(Phe) + L-phenylalanine + ATP = L-phenylalanyl-tRNA(Phe) + AMP + diphosphate + H(+). This chain is Phenylalanine--tRNA ligase alpha subunit, found in Campylobacter jejuni subsp. doylei (strain ATCC BAA-1458 / RM4099 / 269.97).